Reading from the N-terminus, the 430-residue chain is Histidine--tRNA ligase (430 aa).

Belongs to the class-II aminoacyl-tRNA synthetase family. In terms of assembly, homodimer.

Its subcellular location is the cytoplasm. The enzyme catalyses tRNA(His) + L-histidine + ATP = L-histidyl-tRNA(His) + AMP + diphosphate + H(+). The sequence is that of Histidine--tRNA ligase from Lactococcus lactis subsp. cremoris (strain MG1363).